The sequence spans 545 residues: Arginine-containing cyclodipeptide synthase ateA (545 aa).

Positions 390–425 (GNQQTPTQSADMDSTVSHRQQQPASSRSYTSKQNQM) are enriched in polar residues. The disordered stretch occupies residues 390–433 (GNQQTPTQSADMDSTVSHRQQQPASSRSYTSKQNQMPRPLVISV). Residues 434 to 438 (DDPSE) carry the Conserved DDXXE motif motif.

It belongs to the arginine-containing cyclodipeptide synthase family.

The enzyme catalyses L-glutamyl-tRNA(Glu) + L-arginyl-tRNA(Arg) = cyclo(L-arginyl-L-glutamyl) + tRNA(Glu) + tRNA(Arg) + 2 H(+). It functions in the pathway secondary metabolite biosynthesis. Arginine-containing cyclodipeptide synthase; part of the cluster that mediates the biosynthesis of a highly modified cyclo-arginine-glutamate dipeptide (cRE). Within the pathway, ateA acts as the scaffold-generating enzyme and is responsible for formation of the cyclo-Arg-Glu diketopiperazine (cRW) from L-arginyl-tRNA(Arg) + L-glutamyl-tRNA(Glu). Additional enzymes from the cluster then further modify the cyclo-Arg-Glu diketopiperazine (cRW) scaffold. The sequence is that of Arginine-containing cyclodipeptide synthase ateA from Aspergillus terreus.